Reading from the N-terminus, the 842-residue chain is Follistatin-related protein 4 (842 aa).

Residues 1-22 (MKPGGFWLHLTLLGASLPAALG) form the signal peptide. Residues 81–135 (KTGEPECQCLEACRPSYVPVCGSDGRFYENHCKLHRAACLLGKRITVIHSKDCFL) form the Kazal-like domain. 3 disulfide bridges follow: cysteine 87-cysteine 119, cysteine 93-cysteine 112, and cysteine 101-cysteine 133. The 36-residue stretch at 174–209 (QKRLLVESLFRDLDADGNGHLSSSELAQHVLKKQDL) folds into the EF-hand domain. 5 residues coordinate Ca(2+): aspartate 187, aspartate 189, asparagine 191, histidine 193, and glutamate 198. 2 consecutive Ig-like domains span residues 251-338 (PEDR…LQVN) and 341-426 (PVIR…EDIS). Disulfide bonds link cysteine 270–cysteine 321 and cysteine 362–cysteine 413. A glycan (N-linked (GlcNAc...) asparagine) is linked at asparagine 318.

The protein localises to the secreted. The chain is Follistatin-related protein 4 (FSTL4) from Homo sapiens (Human).